A 189-amino-acid chain; its full sequence is Large ribosomal subunit protein bL9 (189 aa).

This sequence belongs to the bacterial ribosomal protein bL9 family.

Its function is as follows. Binds to the 23S rRNA. This is Large ribosomal subunit protein bL9 from Cereibacter sphaeroides (strain ATCC 17023 / DSM 158 / JCM 6121 / CCUG 31486 / LMG 2827 / NBRC 12203 / NCIMB 8253 / ATH 2.4.1.) (Rhodobacter sphaeroides).